Consider the following 569-residue polypeptide: Potassium-transporting ATPase potassium-binding subunit (569 aa).

A run of 10 helical transmembrane segments spans residues 3-23, 68-88, 136-156, 179-199, 259-279, 284-304, 384-404, 422-442, 490-510, and 534-554; these read LMEY…SPVL, AASL…VLML, VGLA…AVAV, VLYV…GQGV, LQML…GEAV, HAWT…LSLY, GLYG…LMVG, AMLA…VAAV, LALA…GVAG, and LLLT…ALAL.

Belongs to the KdpA family. The system is composed of three essential subunits: KdpA, KdpB and KdpC.

The protein resides in the cell inner membrane. Part of the high-affinity ATP-driven potassium transport (or Kdp) system, which catalyzes the hydrolysis of ATP coupled with the electrogenic transport of potassium into the cytoplasm. This subunit binds the periplasmic potassium ions and delivers the ions to the membrane domain of KdpB through an intramembrane tunnel. This chain is Potassium-transporting ATPase potassium-binding subunit, found in Nitratidesulfovibrio vulgaris (strain DP4) (Desulfovibrio vulgaris).